We begin with the raw amino-acid sequence, 84 residues long: MSSGGLLLLLGLLTLWAELTPISGHDRPTFCNLAPESGRCRGHLRRIYYNLESNKCEVFFYGGCGGNDNNFSTWDECRHTCVGK.

The first 24 residues, 1–24 (MSSGGLLLLLGLLTLWAELTPISG), serve as a signal peptide directing secretion. Residues 31-81 (CNLAPESGRCRGHLRRIYYNLESNKCEVFFYGGCGGNDNNFSTWDECRHTC) form the BPTI/Kunitz inhibitor domain. Disulfide bonds link Cys-31/Cys-81, Cys-40/Cys-64, and Cys-56/Cys-77. A glycan (N-linked (GlcNAc...) asparagine) is linked at Asn-70.

The protein belongs to the venom Kunitz-type family. In terms of tissue distribution, expressed by the venom gland.

It is found in the secreted. Serine protease inhibitor that inhibits plasmin and trypsin. This chain is Kunitz-type serine protease inhibitor B4, found in Daboia siamensis (Eastern Russel's viper).